The chain runs to 143 residues: MSTPFQVYIVSPDRALFSGEVVQIVAPAEYGELGILSNHIPLIATLKPGQVRLTKSDGEEEVLYVSGGFIEVQSKQTIILADEAARAAELDEEKIKEAKARAEKLIKSPDGEINYERMKNYEKMQIELVQLTAQLAAIRRHRQ.

It belongs to the ATPase epsilon chain family. In terms of assembly, F-type ATPases have 2 components, CF(1) - the catalytic core - and CF(0) - the membrane proton channel. CF(1) has five subunits: alpha(3), beta(3), gamma(1), delta(1), epsilon(1). CF(0) has three main subunits: a, b and c.

The protein resides in the cell inner membrane. Its function is as follows. Produces ATP from ADP in the presence of a proton gradient across the membrane. The chain is ATP synthase epsilon chain from Dichelobacter nodosus (strain VCS1703A).